Here is a 161-residue protein sequence, read N- to C-terminus: Tropomyosin-2 (161 aa).

The stretch at 1-161 (MEKIKEKLNS…DEIANSLENL (161 aa)) forms a coiled coil. Over residues 32-43 (LEQSNTEKENEI) the composition is skewed to basic and acidic residues. The tract at residues 32–97 (LEQSNTEKEN…NQDLEQQLED (66 aa)) is disordered. Position 55 is a phosphoserine (S55). Positions 62–83 (SQLSDTKQLAEDSNNLRSNNEN) are enriched in polar residues. S116 and S157 each carry phosphoserine.

Homodimer.

It is found in the cytoplasm. It localises to the cytoskeleton. Its function is as follows. Involved in cell morphogenesis. Binds to F-actin and stabilizes the actin filaments. The chain is Tropomyosin-2 (TPM2) from Saccharomyces cerevisiae (strain ATCC 204508 / S288c) (Baker's yeast).